Consider the following 397-residue polypeptide: Arginine biosynthesis bifunctional protein ArgJ (397 aa).

Positions 147, 173, 184, 270, 392, and 397 each coordinate substrate. Residue threonine 184 is the Nucleophile of the active site.

It belongs to the ArgJ family. As to quaternary structure, heterotetramer of two alpha and two beta chains.

It localises to the cytoplasm. The catalysed reaction is N(2)-acetyl-L-ornithine + L-glutamate = N-acetyl-L-glutamate + L-ornithine. It carries out the reaction L-glutamate + acetyl-CoA = N-acetyl-L-glutamate + CoA + H(+). It functions in the pathway amino-acid biosynthesis; L-arginine biosynthesis; L-ornithine and N-acetyl-L-glutamate from L-glutamate and N(2)-acetyl-L-ornithine (cyclic): step 1/1. The protein operates within amino-acid biosynthesis; L-arginine biosynthesis; N(2)-acetyl-L-ornithine from L-glutamate: step 1/4. Functionally, catalyzes two activities which are involved in the cyclic version of arginine biosynthesis: the synthesis of N-acetylglutamate from glutamate and acetyl-CoA as the acetyl donor, and of ornithine by transacetylation between N(2)-acetylornithine and glutamate. This Streptococcus thermophilus (strain CNRZ 1066) protein is Arginine biosynthesis bifunctional protein ArgJ.